The chain runs to 300 residues: ETS homologous factor (300 aa).

Residues 29-115 (STCNVSSGFF…SNLQHLKWNG (87 aa)) form the PNT domain. A disordered region spans residues 183–202 (ESPDMKKEQDPPAKCHTKKH). Positions 185–195 (PDMKKEQDPPA) are enriched in basic and acidic residues. Residues 207–289 (THLWEFIRDI…DGRRLVYKFG (83 aa)) constitute a DNA-binding region (ETS).

This sequence belongs to the ETS family. Expressed exclusively in tissues with a high content of epithelial cells. Highly expressed in salivary gland, mammary gland, prostate, and lung. Weakly expressed in kidney and colon. Not detected in heart, brain, placenta, liver, skeletal muscle, spleen, thymus, testis, ovary, small intestine or peripheral blood leukocytes.

The protein resides in the nucleus. In terms of biological role, transcriptional activator that may play a role in regulating epithelial cell differentiation and proliferation. May act as a repressor for a specific subset of ETS/AP-1-responsive genes and as a modulator of the nuclear response to mitogen-activated protein kinase signaling cascades. Binds to DNA sequences containing the consensus nucleotide core sequence GGAA. Involved in regulation of TNFRSF10B/DR5 expression through Ets-binding sequences on the TNFRSF10B/DR5 promoter. May contribute to development and carcinogenesis by acting as a tumor suppressor gene or anti-oncogene. This is ETS homologous factor from Homo sapiens (Human).